Reading from the N-terminus, the 210-residue chain is Dephospho-CoA kinase (210 aa).

The DPCK domain maps to 15 to 210 (VLGLTGGIGC…HKGYLKLALK (196 aa)). An ATP-binding site is contributed by 23 to 28 (GCGKTA).

The protein belongs to the CoaE family.

The protein localises to the cytoplasm. It carries out the reaction 3'-dephospho-CoA + ATP = ADP + CoA + H(+). It functions in the pathway cofactor biosynthesis; coenzyme A biosynthesis; CoA from (R)-pantothenate: step 5/5. Its function is as follows. Catalyzes the phosphorylation of the 3'-hydroxyl group of dephosphocoenzyme A to form coenzyme A. The chain is Dephospho-CoA kinase from Pseudoalteromonas translucida (strain TAC 125).